We begin with the raw amino-acid sequence, 166 residues long: Cyanate hydratase (166 aa).

Catalysis depends on residues arginine 92, glutamate 95, and serine 118.

This sequence belongs to the cyanase family.

It carries out the reaction cyanate + hydrogencarbonate + 3 H(+) = NH4(+) + 2 CO2. Functionally, catalyzes the reaction of cyanate with bicarbonate to produce ammonia and carbon dioxide. This Sorghum bicolor (Sorghum) protein is Cyanate hydratase.